Reading from the N-terminus, the 318-residue chain is UDP-N-acetylenolpyruvoylglucosamine reductase (318 aa).

One can recognise an FAD-binding PCMH-type domain in the interval 38–204 (IGGICPVVVE…LGIEILLKEG (167 aa)). The active site involves Arg-182. Positions 212-232 (SLKDKRDRRNSSQPENKKSAG) are disordered. Residues 213–229 (LKDKRDRRNSSQPENKK) show a composition bias toward basic and acidic residues. Ser-233 acts as the Proton donor in catalysis. The active site involves Glu-310.

The protein belongs to the MurB family. The cofactor is FAD.

It localises to the cytoplasm. The catalysed reaction is UDP-N-acetyl-alpha-D-muramate + NADP(+) = UDP-N-acetyl-3-O-(1-carboxyvinyl)-alpha-D-glucosamine + NADPH + H(+). It functions in the pathway cell wall biogenesis; peptidoglycan biosynthesis. Its function is as follows. Cell wall formation. This chain is UDP-N-acetylenolpyruvoylglucosamine reductase, found in Leptospira borgpetersenii serovar Hardjo-bovis (strain JB197).